Consider the following 327-residue polypeptide: Phenylalanine--tRNA ligase alpha subunit (327 aa).

Glu252 contributes to the Mg(2+) binding site.

It belongs to the class-II aminoacyl-tRNA synthetase family. Phe-tRNA synthetase alpha subunit type 1 subfamily. As to quaternary structure, tetramer of two alpha and two beta subunits. The cofactor is Mg(2+).

The protein localises to the cytoplasm. The catalysed reaction is tRNA(Phe) + L-phenylalanine + ATP = L-phenylalanyl-tRNA(Phe) + AMP + diphosphate + H(+). This is Phenylalanine--tRNA ligase alpha subunit from Shewanella woodyi (strain ATCC 51908 / MS32).